Here is a 94-residue protein sequence, read N- to C-terminus: Small ribosomal subunit protein bS20 (94 aa).

This sequence belongs to the bacterial ribosomal protein bS20 family.

Binds directly to 16S ribosomal RNA. The protein is Small ribosomal subunit protein bS20 of Symbiobacterium thermophilum (strain DSM 24528 / JCM 14929 / IAM 14863 / T).